The chain runs to 287 residues: Large ribosomal subunit protein uL2 (287 aa).

The segment at Arg221–Ser287 is disordered. Residues Lys258–Ser287 are compositionally biased toward basic residues.

Belongs to the universal ribosomal protein uL2 family. As to quaternary structure, part of the 50S ribosomal subunit. Forms a bridge to the 30S subunit in the 70S ribosome.

One of the primary rRNA binding proteins. Required for association of the 30S and 50S subunits to form the 70S ribosome, for tRNA binding and peptide bond formation. It has been suggested to have peptidyltransferase activity; this is somewhat controversial. Makes several contacts with the 16S rRNA in the 70S ribosome. This is Large ribosomal subunit protein uL2 from Synechococcus sp. (strain RCC307).